The following is a 380-amino-acid chain: E3 ubiquitin-protein ligase RNF13 (380 aa).

Residues 1–34 (MLLSIGMLMLSATQVYTILTVQLFAFLNLLPVEA) form the signal peptide. The Lumenal segment spans residues 35-182 (DILAYNFENA…VPELSLPLEY (148 aa)). The 97-residue stretch at 64–160 (LKGFLINSKP…GESSANSLKD (97 aa)) folds into the PA domain. N-linked (GlcNAc...) asparagine glycosylation occurs at Asn-88. Residues 183–203 (YLIPFLIIVGICLILIVIFMI) traverse the membrane as a helical segment. Topologically, residues 204-380 (TKFVQDRHRN…EPDYNIANTV (177 aa)) are cytoplasmic. The RING-type; atypical zinc finger occupies 240–282 (CAICLEEYEDGDKLRILPCSHAYHCKCVDPWLTKTKKTCPVCK). A disordered region spans residues 285–380 (VVPSQGDSDS…EPDYNIANTV (96 aa)). Acidic residues predominate over residues 338–356 (SDYEDDDNEETDSSDADNE).

Interacts with ERN1. In terms of processing, autoubiquitinated.

It localises to the endoplasmic reticulum membrane. The protein resides in the late endosome membrane. Its subcellular location is the lysosome membrane. It is found in the nucleus inner membrane. It carries out the reaction S-ubiquitinyl-[E2 ubiquitin-conjugating enzyme]-L-cysteine + [acceptor protein]-L-lysine = [E2 ubiquitin-conjugating enzyme]-L-cysteine + N(6)-ubiquitinyl-[acceptor protein]-L-lysine.. Its pathway is protein modification; protein ubiquitination. E3 ubiquitin-protein ligase that regulates cell proliferation. Involved in apoptosis regulation. Mediates ER stress-induced activation of JNK signaling pathway and apoptosis by promoting ERN1 activation and splicing of XBP1 mRNA. Also involved in protein trafficking and localization. The protein is E3 ubiquitin-protein ligase RNF13 (Rnf13) of Rattus norvegicus (Rat).